Reading from the N-terminus, the 136-residue chain is Large ribosomal subunit protein uL16 (136 aa).

The protein belongs to the universal ribosomal protein uL16 family. Part of the 50S ribosomal subunit.

In terms of biological role, binds 23S rRNA and is also seen to make contacts with the A and possibly P site tRNAs. This is Large ribosomal subunit protein uL16 from Rickettsia bellii (strain OSU 85-389).